A 560-amino-acid chain; its full sequence is Probable methionine--tRNA ligase, cytoplasmic (560 aa).

A 'HIGH' region motif is present at residues 16–26 (PYVNNQPHLGN). Positions 347–351 (KFSKS) match the 'KMSKS' region motif. An ATP-binding site is contributed by K350.

Belongs to the class-I aminoacyl-tRNA synthetase family.

It localises to the cytoplasm. It catalyses the reaction tRNA(Met) + L-methionine + ATP = L-methionyl-tRNA(Met) + AMP + diphosphate. The polypeptide is Probable methionine--tRNA ligase, cytoplasmic (Vairimorpha ceranae (strain BRL01) (Microsporidian parasite)).